Consider the following 503-residue polypeptide: Cytochrome P450 11B2, mitochondrial (503 aa).

The transit peptide at 1-24 directs the protein to the mitochondrion; the sequence is MALRAKAEVCVAAPWLSLQRARAL. A 21-hydroxyprogesterone-binding site is contributed by F381. Heme is bound at residue C450.

It belongs to the cytochrome P450 family. The cofactor is heme. Expressed sporadically in the zona glomerulosa (zG) of the adrenal cortex (conventional zonation), as well as in aldosterone-producing cell clusters (APCCs) composed of morphological zG cells in contact with the capsule (variegated zonation).

The protein localises to the mitochondrion inner membrane. The catalysed reaction is a steroid + 2 reduced [adrenodoxin] + O2 + 2 H(+) = an 11beta-hydroxysteroid + 2 oxidized [adrenodoxin] + H2O. It catalyses the reaction 21-hydroxyprogesterone + 2 reduced [adrenodoxin] + O2 + 2 H(+) = corticosterone + 2 oxidized [adrenodoxin] + H2O. The enzyme catalyses corticosterone + 2 reduced [adrenodoxin] + O2 + 2 H(+) = 18-hydroxycorticosterone + 2 oxidized [adrenodoxin] + H2O. It carries out the reaction 18-hydroxycorticosterone + 2 reduced [adrenodoxin] + O2 + 2 H(+) = aldosterone + 2 oxidized [adrenodoxin] + 2 H2O. The catalysed reaction is 11-deoxycortisol + 2 reduced [adrenodoxin] + O2 + 2 H(+) = cortisol + 2 oxidized [adrenodoxin] + H2O. It catalyses the reaction 21-hydroxyprogesterone + 2 reduced [adrenodoxin] + O2 + 2 H(+) = 18-hydroxy-11-deoxycorticosterone + 2 oxidized [adrenodoxin] + H2O. The enzyme catalyses cortisol + 2 reduced [adrenodoxin] + O2 + 2 H(+) = 18-hydroxycortisol + 2 oxidized [adrenodoxin] + H2O. It carries out the reaction 18-hydroxycortisol + 2 reduced [adrenodoxin] + O2 + 2 H(+) = 18-oxocortisol + 2 oxidized [adrenodoxin] + 2 H2O. Its pathway is steroid biosynthesis. Functionally, a cytochrome P450 monooxygenase that catalyzes the biosynthesis of aldosterone, the main mineralocorticoid in the human body responsible for salt and water homeostasis, thus involved in blood pressure regulation, arterial hypertension, and the development of heart failure. Catalyzes three sequential oxidative reactions of 11-deoxycorticosterone (21-hydroxyprogesterone), namely 11-beta hydroxylation, followed by two successive oxidations at C18 yielding 18-hydroxy and then 18-oxo intermediates (that would not leave the enzyme active site during the consecutive hydroxylation reactions), ending with the formation of aldosterone. Can also produce 18-hydroxycortisol and 18-oxocortisol, derived from successive oxidations of cortisol at C18, normally found at very low levels, but significantly increased in primary aldosteronism, the most common form of secondary hypertension. Mechanistically, uses molecular oxygen inserting one oxygen atom into a substrate and reducing the second into a water molecule. Two electrons are provided by NADPH via a two-protein mitochondrial transfer system comprising flavoprotein FDXR (adrenodoxin/ferredoxin reductase) and nonheme iron-sulfur protein FDX1 or FDX2 (adrenodoxin/ferredoxin). Could also be involved in the androgen metabolic pathway. The sequence is that of Cytochrome P450 11B2, mitochondrial from Homo sapiens (Human).